We begin with the raw amino-acid sequence, 827 residues long: Spastin (827 aa).

The span at 1 to 13 (MVRNKYTLTTAGK) shows a compositional bias: polar residues. Residues 1–58 (MVRNKYTLTTAGKSPSKKSRTGSLSKQHDATGDDDGETGTLDGSGSAAGSPVGGGTDA) form a disordered region. The Cytoplasmic segment spans residues 1–79 (MVRNKYTLTT…KQNLYIISFP (79 aa)). A compositionally biased stretch (low complexity) spans 38–50 (TGTLDGSGSAAGS). An intramembrane region (helical) is located at residues 80 to 100 (VIFVFNVLRSLLYQLFIVFRY). The Cytoplasmic segment spans residues 101-827 (VYNFTTKVVY…WLQDFGDVTL (727 aa)). 2 disordered regions span residues 127–190 (QHGH…AHPL) and 207–229 (SIQR…KQKH). The segment covering 129–141 (GHHHHHHHRHSSH) has biased composition (basic residues). The segment covering 142–190 (SIHSTAAAHQLQQHQQQQQHQYSLLQQEQHGVTEPQQQQQQQHQAAHPL) has biased composition (low complexity). Residues 231-306 (HRRAFEYISK…SMARDRLQFL (76 aa)) enclose the MIT domain. Disordered regions lie at residues 358–381 (HHPA…ATPS), 398–433 (VGYK…GGAG), and 476–526 (VSIP…PQIS). Positions 364 to 381 (TAASSRPTTAATAPATPS) are enriched in low complexity. Composition is skewed to low complexity over residues 476 to 486 (VSIPIPGSSPV) and 510 to 524 (QQPQ…QQPQ). 592-599 (GPPGNGKT) contributes to the ATP binding site.

It belongs to the AAA ATPase family. Spastin subfamily. As to quaternary structure, homohexamer. The homohexamer is stabilized by ATP-binding. The homohexamer may adopt a ring conformation through which microtubules pass prior to being severed. Interacts with microtubules.

It localises to the membrane. The protein localises to the cytoplasm. The protein resides in the cytoskeleton. Its subcellular location is the microtubule organizing center. It is found in the centrosome. It carries out the reaction n ATP + n H2O + a microtubule = n ADP + n phosphate + (n+1) alpha/beta tubulin heterodimers.. In terms of biological role, ATP-dependent microtubule severing protein. Microtubule severing may promote reorganization of cellular microtubule arrays and the release of microtubules from the microtubule organizing center following nucleation. The protein is Spastin (spas) of Anopheles gambiae (African malaria mosquito).